Reading from the N-terminus, the 203-residue chain is Formate hydrogenlyase subunit 2 (203 aa).

4Fe-4S ferredoxin-type domains are found at residues 2-32, 42-72, 73-102, and 137-169; these read NRFV…HGLQ, NEKE…TRVD, GAVQ…FSGS, and RAIA…LVDN. The [4Fe-4S] cluster site is built by Cys-12, Cys-15, Cys-18, Cys-22, Cys-51, Cys-54, Cys-59, Cys-63, Cys-82, Cys-85, Cys-88, Cys-92, Cys-143, Cys-146, Cys-155, and Cys-159.

As to quaternary structure, FHL comprises of a formate dehydrogenase, unidentified electron carriers and a hydrogenase (isoenzyme 3). In this non-energy conserving pathway, molecular hydrogen and carbodioxide are released from formate. The cofactor is [4Fe-4S] cluster.

Probable electron transfer protein for hydrogenase 3. The sequence is that of Formate hydrogenlyase subunit 2 (hycB) from Escherichia coli (strain K12).